Here is a 620-residue protein sequence, read N- to C-terminus: Tyrosine-protein kinase ITK/TSK (620 aa).

Residues 4 to 111 form the PH domain; the sequence is FILLEEQLIK…WVLALKEETR (108 aa). The Btk-type zinc-finger motif lies at 113-149; sequence NNSLVPKYHPNFWMDGKWRCCSQLEKLATGCAQYDPT. 4 residues coordinate Zn(2+): His121, Cys132, Cys133, and Cys143. Residues 171 to 231 enclose the SH3 domain; the sequence is PEETVVIALY…PSSYLVEKSP (61 aa). A Phosphotyrosine; by autocatalysis modification is found at Tyr180. In terms of domain architecture, SH2 spans 239–338; it reads WYNKSISRDK…GLVTRLRYPV (100 aa). A Protein kinase domain is found at 363-615; it reads LTFVQEIGSG…SRLLRQLAEI (253 aa). Residues 369–377 and Lys391 each bind ATP; that span reads IGSGQFGLV. Asp482 (proton acceptor) is an active-site residue. Tyr512 is subject to Phosphotyrosine; by LCK. At Ser565 the chain carries Phosphoserine.

This sequence belongs to the protein kinase superfamily. Tyr protein kinase family. TEC subfamily. Homooligomerizes; this association negatively regulates kinase activity. Interacts with PPIA/CYPA; this interaction regulates TCR signal strength via a proline-directed conformational switch in ITK. Interacts with THEMIS. Interacts with FASLG. Interacts with VAV1; this interaction is important for VAV1 localization and TCR-induced actin polarization. Interacts with TBX21. Zn(2+) serves as cofactor. Post-translationally, phosphorylated at Tyr-512 in the activation loop of the kinase domain by LCK. Subsequent autophosphorylation at Tyr-180 leads to the kinase activation. The autophosphorylated Tyr-180 lies within the substrate binding sequence of the SH3 domain. In terms of processing, ubiquitinated. As to expression, T-cell lines and natural killer cell lines.

It is found in the cytoplasm. The protein localises to the nucleus. It catalyses the reaction L-tyrosyl-[protein] + ATP = O-phospho-L-tyrosyl-[protein] + ADP + H(+). Tyrosine kinase that plays an essential role in regulation of the adaptive immune response. Regulates the development, function and differentiation of conventional T-cells and nonconventional NKT-cells. When antigen presenting cells (APC) activate T-cell receptor (TCR), a series of phosphorylation lead to the recruitment of ITK to the cell membrane, in the vicinity of the stimulated TCR receptor, where it is phosphorylated by LCK. Phosphorylation leads to ITK autophosphorylation and full activation. Once activated, phosphorylates PLCG1, leading to the activation of this lipase and subsequent cleavage of its substrates. In turn, the endoplasmic reticulum releases calcium in the cytoplasm and the nuclear activator of activated T-cells (NFAT) translocates into the nucleus to perform its transcriptional duty. Phosphorylates 2 essential adapter proteins: the linker for activation of T-cells/LAT protein and LCP2. Then, a large number of signaling molecules such as VAV1 are recruited and ultimately lead to lymphokine production, T-cell proliferation and differentiation. Required for TCR-mediated calcium response in gamma-delta T-cells, may also be involved in the modulation of the transcriptomic signature in the Vgamma2-positive subset of immature gamma-delta T-cells. Phosphorylates TBX21 at 'Tyr-530' and mediates its interaction with GATA3. The chain is Tyrosine-protein kinase ITK/TSK (ITK) from Homo sapiens (Human).